A 209-amino-acid polypeptide reads, in one-letter code: GTP-binding nuclear protein Ran1B (209 aa).

The Small GTPase Ran-type domain occupies 1 to 162; that stretch reads NFKLVIVGDG…LYLARKLAGD (162 aa). 9-16 is a GTP binding site; the sequence is DGGTGKTT. A switch-I region spans residues 28 to 36; the sequence is KKYEPTIGV. GTP-binding positions include glycine 59, 113 to 116, and 141 to 143; these read NKVD and SAK. The switch-II stretch occupies residues 59–75; sequence GQEKFGGLRDGYYIHGQ. A compositionally biased stretch (low complexity) spans 187–200; the sequence is QHEAELAAAASQPL. The interval 187–209 is disordered; sequence QHEAELAAAASQPLPDDDDDAFD.

Belongs to the small GTPase superfamily. Ran family. In terms of assembly, found in a nuclear export complex with RanGTP, exportin and pre-miRNA.

The protein localises to the nucleus. Its function is as follows. GTP-binding protein involved in nucleocytoplasmic transport. Required for the import of protein into the nucleus and also for RNA export. Involved in chromatin condensation and control of cell cycle. The sequence is that of GTP-binding nuclear protein Ran1B (RAN1B) from Lotus japonicus (Lotus corniculatus var. japonicus).